Consider the following 389-residue polypeptide: NAD-dependent protein deacetylase sirtuin-2 (389 aa).

Residues Met1–Gly34 are disordered. Ala2 bears the N-acetylalanine mark. A phosphoserine mark is found at Ser23 and Ser25. Position 27 is a phosphothreonine (Thr27). The Nuclear export signal signature appears at Leu41–Leu51. Phosphoserine is present on Ser53. The Deacetylase sirtuin-type domain occupies Arg57–Lys338. NAD(+)-binding positions include Ala85–Thr89 and Asp95–Arg97. Ser100 is subject to Phosphoserine. Gln167–Asp170 contacts NAD(+). His187 (proton acceptor) is an active-site residue. Cys195, Cys200, Cys221, and Cys224 together coordinate Zn(2+). Residues Thr262–Ser263, Asn286–Glu288, and Cys324 contribute to the NAD(+) site. A disordered region spans residues Ala350–Gln389. A compositionally biased stretch (polar residues) spans Asp353–Pro369. Phosphoserine occurs at positions 368 and 372. Residues Glu378–Gln389 are compositionally biased toward basic and acidic residues.

It belongs to the sirtuin family. Class I subfamily. As to quaternary structure, interacts with CDC20, FOXO3 and FZR1. Associates with microtubule in primary cortical mature neurons. Homotrimer. Interacts (via both phosphorylated, unphosphorylated, active or inactive forms) with HDAC6; the interaction is necessary for the complex to interact with alpha-tubulin, suggesting that these proteins belong to a large complex that deacetylates the cytoskeleton. Interacts with FOXO1; the interaction is disrupted upon serum-starvation or oxidative stress, leading to increased level of acetylated FOXO1 and induction of autophagy. Interacts with RELA; the interaction occurs in the cytoplasm and is increased in a TNF-alpha-dependent manner. Interacts with HOXA10; the interaction is direct. Interacts with YWHAB and YWHAG; the interactions occur in a AKT-dependent manner and increase SIRT2-dependent TP53 deacetylation. Interacts with MAPK1/ERK2 and MAPK3/ERK1; the interactions increase SIRT2 stability and deacetylation activity. Interacts (phosphorylated form) with KMT5A isoform 2; the interaction is direct, stimulates KMT5A-mediated methyltransferase activity on histone at 'Lys-20' (H4K20me1) and is increased in a H(2)O(2)-induced oxidative stress-dependent manner. Interacts with G6PD; the interaction is enhanced by H(2)O(2) treatment. Interacts with a G1/S-specific cyclin E-CDK2 complex. Interacts with AURKA, CDK5R1 (p35 form) and CDK5 and HIF1A. Interacts with the tRNA ligase SARS1; recruited to the VEGFA promoter via interaction with SARS1. Isoform 2 and isoform 4 associate with microtubules in primary cortical mature neurons. Interacts with BEX4; negatively regulates alpha-tubulin deacetylation by SIRT2. The cofactor is Zn(2+). In terms of processing, phosphorylated at phosphoserine and phosphothreonine. Phosphorylated at Ser-368 by a mitotic kinase CDK1/cyclin B at the G2/M transition; phosphorylation regulates the delay in cell-cycle progression. Phosphorylated at Ser-368 by a mitotic kinase G1/S-specific cyclin E/Cdk2 complex; phosphorylation inactivates SIRT2-mediated alpha-tubulin deacetylation and thereby negatively regulates cell adhesion, cell migration and neurite outgrowth during neuronal differentiation. Phosphorylated by cyclin A/Cdk2 and p35-Cdk5 complexes and to a lesser extent by the cyclin D3/Cdk4 and cyclin B/Cdk1, in vitro. Dephosphorylated at Ser-368 by CDC14A and CDC14B around early anaphase. Acetylated by EP300; acetylation leads both to the decreased of SIRT2-mediated alpha-tubulin deacetylase activity and SIRT2-mediated down-regulation of TP53 transcriptional activity. Post-translationally, ubiquitinated. As to expression, isoform 1 is weakly expressed in the cortex at postnatal(P) days P1, P3 and P7, and increases progressively between P17 and older adult cortex. Isoform 1 is also expressed in heart, liver and skeletal muscle, weakly expressed in the striatum and spinal cord. Isoform 2 is not expressed in the cortex at P1, P3 and P7, and increases strongly and progressively between P17 and older adult cortex. Isoform 2 is also expressed in the heart, liver, striatum and spinal cord. Isoform 4 is weakly expressed in older adult cortex and spinal cords. Expressed in the cortex. Expressed in postnatal sciatic nerves during myelination and during remyelination after nerve injury. Expressed in neurons, oligodendrocytes, Schwann cells, Purkinje cells and in astrocytes of white matter. Strongly expressed in preadipocytes compared with differentiated adipocytes. Expressed in cerebellar granule cells. Expressed in the inner ear: in the cochlea, expressed in types I and V fibrocytes in the spiral ligament (SL) and slightly in stria vascularis (SV); in the organ of Corti, expressed in some supporting cells; in the crista ampullaris, expressed in spiral ganglion cells; also expressed in the endolymphatic sac (ES) epithelial cells (at protein level). Expressed in the brain, spinal cord, optic nerve and hippocampus. Strongly expressed in 6-8 week-old ovulated meiosis II oocytes and weakly expressed in 45-58 week-old ovulated meiosis II oocytes. Expressed in the cochlea, vestibule and acoustic nerve of the inner ear.

It is found in the nucleus. Its subcellular location is the cytoplasm. It localises to the perinuclear region. The protein resides in the perikaryon. The protein localises to the cytoskeleton. It is found in the cell projection. Its subcellular location is the growth cone. It localises to the myelin membrane. The protein resides in the microtubule organizing center. The protein localises to the centrosome. It is found in the spindle. Its subcellular location is the chromosome. It localises to the midbody. The protein resides in the centriole. It carries out the reaction N(6)-acetyl-L-lysyl-[protein] + NAD(+) + H2O = 2''-O-acetyl-ADP-D-ribose + nicotinamide + L-lysyl-[protein]. The catalysed reaction is N(6)-tetradecanoyl-L-lysyl-[protein] + NAD(+) + H2O = 2''-O-tetradecanoyl-ADP-D-ribose + nicotinamide + L-lysyl-[protein]. The enzyme catalyses N(6)-hexadecanoyl-L-lysyl-[protein] + NAD(+) + H2O = 2''-O-hexadecanoyl-ADP-D-ribose + nicotinamide + L-lysyl-[protein]. Its activity is regulated as follows. Inhibited by Sirtinol, A3 and M15 small molecules. Inhibited by nicotinamide. Inhibited by a macrocyclic peptide inhibitor S2iL5. Inhibited by EP300-induced acetylation. In terms of biological role, NAD-dependent protein deacetylase, which deacetylates internal lysines on histone and alpha-tubulin as well as many other proteins such as key transcription factors. Participates in the modulation of multiple and diverse biological processes such as cell cycle control, genomic integrity, microtubule dynamics, cell differentiation, metabolic networks, and autophagy. Plays a major role in the control of cell cycle progression and genomic stability. Functions in the antephase checkpoint preventing precocious mitotic entry in response to microtubule stress agents, and hence allowing proper inheritance of chromosomes. Positively regulates the anaphase promoting complex/cyclosome (APC/C) ubiquitin ligase complex activity by deacetylating CDC20 and FZR1, then allowing progression through mitosis. Associates both with chromatin at transcriptional start sites (TSSs) and enhancers of active genes. Plays a role in cell cycle and chromatin compaction through epigenetic modulation of the regulation of histone H4 'Lys-20' methylation (H4K20me1) during early mitosis. Specifically deacetylates histone H4 at 'Lys-16' (H4K16ac) between the G2/M transition and metaphase enabling H4K20me1 deposition by KMT5A leading to ulterior levels of H4K20me2 and H4K20me3 deposition throughout cell cycle, and mitotic S-phase progression. Deacetylates KMT5A modulating KMT5A chromatin localization during the mitotic stress response. Also deacetylates histone H3 at 'Lys-57' (H3K56ac) during the mitotic G2/M transition. During oocyte meiosis progression, may deacetylate histone H4 at 'Lys-16' (H4K16ac) and alpha-tubulin, regulating spindle assembly and chromosome alignment by influencing microtubule dynamics and kinetochore function. Deacetylates histone H4 at 'Lys-16' (H4K16ac) at the VEGFA promoter and thereby contributes to regulate expression of VEGFA, a key regulator of angiogenesis. Deacetylates alpha-tubulin at 'Lys-40' and hence controls neuronal motility, oligodendroglial cell arbor projection processes and proliferation of non-neuronal cells. Phosphorylation at Ser-368 by a G1/S-specific cyclin E-CDK2 complex inactivates SIRT2-mediated alpha-tubulin deacetylation, negatively regulating cell adhesion, cell migration and neurite outgrowth during neuronal differentiation. Deacetylates PARD3 and participates in the regulation of Schwann cell peripheral myelination formation during early postnatal development and during postinjury remyelination. Involved in several cellular metabolic pathways. Plays a role in the regulation of blood glucose homeostasis by deacetylating and stabilizing phosphoenolpyruvate carboxykinase PCK1 activity in response to low nutrient availability. Acts as a key regulator in the pentose phosphate pathway (PPP) by deacetylating and activating the glucose-6-phosphate G6PD enzyme, and therefore, stimulates the production of cytosolic NADPH to counteract oxidative damage. Maintains energy homeostasis in response to nutrient deprivation as well as energy expenditure by inhibiting adipogenesis and promoting lipolysis. Attenuates adipocyte differentiation by deacetylating and promoting FOXO1 interaction to PPARG and subsequent repression of PPARG-dependent transcriptional activity. Plays a role in the regulation of lysosome-mediated degradation of protein aggregates by autophagy in neuronal cells. Deacetylates FOXO1 in response to oxidative stress or serum deprivation, thereby negatively regulating FOXO1-mediated autophagy. Deacetylates a broad range of transcription factors and co-regulators regulating target gene expression. Deacetylates transcriptional factor FOXO3 stimulating the ubiquitin ligase SCF(SKP2)-mediated FOXO3 ubiquitination and degradation. Deacetylates HIF1A and therefore promotes HIF1A degradation and inhibition of HIF1A transcriptional activity in tumor cells in response to hypoxia. Deacetylates RELA in the cytoplasm inhibiting NF-kappaB-dependent transcription activation upon TNF-alpha stimulation. Inhibits transcriptional activation by deacetylating p53/TP53 and EP300. Also deacetylates EIF5A. Functions as a negative regulator on oxidative stress-tolerance in response to anoxia-reoxygenation conditions. Plays a role as tumor suppressor. In addition to protein deacetylase activity, also has activity toward long-chain fatty acyl groups and mediates protein-lysine demyristoylation and depalmitoylation of target proteins, such as ARF6 and KRAS, thereby regulating their association with membranes. Its function is as follows. Deacetylates alpha-tubulin. The protein is NAD-dependent protein deacetylase sirtuin-2 (Sirt2) of Mus musculus (Mouse).